An 813-amino-acid polypeptide reads, in one-letter code: LPS-assembly protein LptD (813 aa).

The N-terminal stretch at 1–22 is a signal peptide; that stretch reads MRRALRLLPLPLSIAICLPAMA.

It belongs to the LptD family. Component of the lipopolysaccharide transport and assembly complex. Interacts with LptE and LptA.

It is found in the cell outer membrane. Functionally, together with LptE, is involved in the assembly of lipopolysaccharide (LPS) at the surface of the outer membrane. The polypeptide is LPS-assembly protein LptD (Xanthomonas oryzae pv. oryzae (strain MAFF 311018)).